Consider the following 322-residue polypeptide: Lipoyl synthase (322 aa).

Residues 1 to 14 (MKTLDENQAPSRQT) show a composition bias toward polar residues. The tract at residues 1–30 (MKTLDENQAPSRQTPESHRRGAEKLSRIPV) is disordered. A compositionally biased stretch (basic and acidic residues) spans 15 to 26 (PESHRRGAEKLS). Residues cysteine 70, cysteine 75, cysteine 81, cysteine 96, cysteine 100, cysteine 103, and serine 310 each coordinate [4Fe-4S] cluster. Residues 82 to 299 (FGHGTATFMI…AGYARELGFA (218 aa)) form the Radical SAM core domain.

Belongs to the radical SAM superfamily. Lipoyl synthase family. [4Fe-4S] cluster is required as a cofactor.

It localises to the cytoplasm. The enzyme catalyses [[Fe-S] cluster scaffold protein carrying a second [4Fe-4S](2+) cluster] + N(6)-octanoyl-L-lysyl-[protein] + 2 oxidized [2Fe-2S]-[ferredoxin] + 2 S-adenosyl-L-methionine + 4 H(+) = [[Fe-S] cluster scaffold protein] + N(6)-[(R)-dihydrolipoyl]-L-lysyl-[protein] + 4 Fe(3+) + 2 hydrogen sulfide + 2 5'-deoxyadenosine + 2 L-methionine + 2 reduced [2Fe-2S]-[ferredoxin]. It participates in protein modification; protein lipoylation via endogenous pathway; protein N(6)-(lipoyl)lysine from octanoyl-[acyl-carrier-protein]: step 2/2. Functionally, catalyzes the radical-mediated insertion of two sulfur atoms into the C-6 and C-8 positions of the octanoyl moiety bound to the lipoyl domains of lipoate-dependent enzymes, thereby converting the octanoylated domains into lipoylated derivatives. This Methylococcus capsulatus (strain ATCC 33009 / NCIMB 11132 / Bath) protein is Lipoyl synthase.